The following is a 308-amino-acid chain: uncharacterized protein (308 aa).

The region spanning 1–60 (MNYSLKQLKVFVTVAQEKSFSRAGERIGLSQSAVSHSVKELENHTGVRLLDRTTREVVLT) is the HTH lysR-type domain. The segment at residues 20 to 39 (FSRAGERIGLSQSAVSHSVK) is a DNA-binding region (H-T-H motif).

This sequence belongs to the LysR transcriptional regulatory family.

This is an uncharacterized protein from Shigella flexneri.